The sequence spans 119 residues: UPF0102 protein MS1289 (119 aa).

The protein belongs to the UPF0102 family.

This Mannheimia succiniciproducens (strain KCTC 0769BP / MBEL55E) protein is UPF0102 protein MS1289.